Consider the following 298-residue polypeptide: Heterogeneous nuclear ribonucleoprotein C (298 aa).

Ala-2 bears the N-acetylalanine mark. Residues Lys-8, Lys-50, Lys-89, and Lys-94 each participate in a glycyl lysine isopeptide (Lys-Gly) (interchain with G-Cter in SUMO2) cross-link. Residues 16-87 form the RRM domain; that stretch reads SRVFIGNLNT…QVLDINLAAE (72 aa). Phosphoserine is present on Ser-108. Disordered stretches follow at residues 131 to 177 and 204 to 298; these read PPPP…VKGD and EKEQ…EDDS. Positions 142–148 match the Nuclear localization signal motif; the sequence is PSKRQRV. Residues Ser-149 and Ser-153 each carry the phosphoserine modification. A compositionally biased stretch (low complexity) spans 162–173; the sequence is SKSGQRGSSSKS. Lys-163 is subject to N6-acetyllysine; alternate. A Glycyl lysine isopeptide (Lys-Gly) (interchain with G-Cter in SUMO2); alternate cross-link involves residue Lys-163. Residues 176–211 adopt a coiled-coil conformation; it reads GDDLQAIKKELTQIKQKVDSLLESLEKIEKEQSKQA. Lys-209 participates in a covalent cross-link: Glycyl lysine isopeptide (Lys-Gly) (interchain with G-Cter in SUMO2). Phosphoserine is present on residues Ser-214, Ser-216, and Ser-217. Residue Lys-222 forms a Glycyl lysine isopeptide (Lys-Gly) (interchain with G-Cter in SUMO2) linkage. Lys-225 participates in a covalent cross-link: Glycyl lysine isopeptide (Lys-Gly) (interchain with G-Cter in SUMO2); alternate. A Glycyl lysine isopeptide (Lys-Gly) (interchain with G-Cter in SUMO1); alternate cross-link involves residue Lys-225. Residues Ser-226, Ser-231, Ser-232, and Ser-234 each carry the phosphoserine modification. Residues 235–246 show a composition bias toward basic and acidic residues; that stretch reads VKKDETNVKMES. Glycyl lysine isopeptide (Lys-Gly) (interchain with G-Cter in SUMO2) cross-links involve residues Lys-236 and Lys-237. Residue Lys-243 forms a Glycyl lysine isopeptide (Lys-Gly) (interchain with G-Cter in SUMO2); alternate linkage. Residue Lys-243 forms a Glycyl lysine isopeptide (Lys-Gly) (interchain with G-Cter in SUMO); alternate linkage. A phosphoserine mark is found at Ser-246 and Ser-253. Positions 248–269 are enriched in acidic residues; the sequence is AGADDSAEEGDLLDDDDNEDRG. Positions 270–279 are enriched in basic and acidic residues; sequence DDQLELKDDE. Acidic residues predominate over residues 280–298; sequence KEPEEGEDDRDSANGEDDS. Residues Ser-291 and Ser-298 each carry the phosphoserine modification.

Belongs to the RRM HNRPC family. RALY subfamily. Tetramer composed of 3 copies of isoform C1 and 1 copy of isoform C2. Assembly of 3 tetramers with bound pre-mRNA gives rise to a 19S complex that interacts with HNRNPA2B1 tetramers. Component of the 40S hnRNP particle. Identified in the spliceosome C complex. Interacts with IGF2BP1. Interacts with PPIA/CYPA. Post-translationally, phosphorylated on Ser-253 and Ser-291 in resting cells. Sumoylated. Sumoylation reduces affinity for mRNA. In terms of processing, ubiquitinated and degraded after nucleo-cytoplasmic transport by YWHAE.

The protein localises to the nucleus. Functionally, binds pre-mRNA and nucleates the assembly of 40S hnRNP particles. Interacts with poly-U tracts in the 3'-UTR or 5'-UTR of mRNA and modulates the stability and the level of translation of bound mRNA molecules. Single HNRNPC tetramers bind 230-240 nucleotides. Trimers of HNRNPC tetramers bind 700 nucleotides. May play a role in the early steps of spliceosome assembly and pre-mRNA splicing. N6-methyladenosine (m6A) has been shown to alter the local structure in mRNAs and long non-coding RNAs (lncRNAs) via a mechanism named 'm(6)A-switch', facilitating binding of HNRNPC, leading to regulation of mRNA splicing. The polypeptide is Heterogeneous nuclear ribonucleoprotein C (Rattus norvegicus (Rat)).